A 1296-amino-acid chain; its full sequence is MVFKNKLFFSSKKSGSSSPDSSNSPRSVGSNSPIRSDKKKSKSASKDEPPIPIPGFVGVGCKQTQIKDGLKKKDGSSKGKQLSSEVQAHSIGKSNLSPSSEVKKPPPPEVKEGPAFVSPIMASSLGLNRIKTRSGPLPQERVFNYRNDPATSNLSKMGADGGDLGSGSATSGSGSGNRKKEAGSSKLGLEENMDRTRPSDNKSDRDSLSPDTGPPRSLSPTLPPSGSRLQNVASSSGTGRSEMSSGRSGPLRNSDFCTPENSYEWENPKESESPRYQALLRMTSAPRKRFPGDIKSFSHELNSKGVRPFPLWKPRRSNNVEEVLNLIRAKFEKAKEEVNSDLAVFAADLVGVLEKNAESHPEWEETFEDLLILARSCAMTTPGDFWLQCEGIVQDLDDRRQELPPGVLKQLHTRMLFILTRCTRLLQFHKESWGEEEQVVQLRQSRVLHSIEKIPPSGAGRSYSAAKVPSTKKAYSQEQHGLDWKEDAVVRSVPPLAPPENYAIKESESPANIDRMSSWKKLPSPALKTVKEAPASEEQNDSKVEPPNIVGSRQGRDDAAVAILNFPPAKDSHEHSSKHRHNISWGYWGEQPLISEESSIMCRICEEEVPTTHVEDHSRVCTLADKYDQKGLSVDERLMAVAGTLDKIAETFRHKDSLAAAESPDGMKVSNSHLTEESDVLSPRLSDWSRKGSEDMLDCFPEADNSIFMDDLRGLPLMSCRTRFGPKSDQGMTTSSASSMTPRSPIPTPRPDPIEQILGGKGTFHDQDDIPQMSELADIAKCAADAIPGDDQSIPFLLSCLEDLRVVIDRRKFDALTVETFGTRIEKLIREKYVHMCELMDDEKVDLLSTVIDEDAPLEDDVVRSLRTSPVHPRDRTSIDDFEIIKPISRGAFGRVFLAKKRTTGDLFAIKVLKKADMIRKNAVESILAERDILINVRNPFVVRFFYSFTCRDNLYLVMEYLNGGDLYSLLRNLGCLEEDIVRVYIAEVVLALEYLHSEGVVHRDLKPDNLLIAHDGHIKLTDFGLSKVGLINSTDDLAGPAVSGTSLLDEEESRLAASEEQLERRKKRSAVGTPDYLAPEILLGTGHGATADWWSVGIILFELIVGIPPFNAEHPQQIFDNILNRKIPWPHVPEEMSAEAHDIIDRFLTEDPHQRLGARGAAEVKQHIFFKDINWDTLARQKAAFVPASESAIDTSYFRSRYSWNTSDEQFFPSGEVPDYSDADSMTNSSGCSSNHHEEGEAEECEGHAEFESGIPVDYSFSNFSFKNLSQLASINYDLLSKGWKDEPQQIPHHK.

3 disordered regions span residues 1-274 (MVFK…SESP), 457-480 (SGAG…QEQH), and 524-553 (SPAL…VGSR). The span at 10 to 32 (SSKKSGSSSPDSSNSPRSVGSNS) shows a compositional bias: low complexity. Residue Ser-32 is modified to Phosphoserine. Composition is skewed to basic and acidic residues over residues 68–77 (DGLKKKDGSS), 101–112 (EVKKPPPPEVKE), and 178–208 (RKKE…RDSL). Residues 214–249 (PPRSLSPTLPPSGSRLQNVASSSGTGRSEMSSGRSG) are compositionally biased toward low complexity. The C2H2-type; atypical zinc finger occupies 602–621 (CRICEEEVPTTHVEDHSRVC). Residues 724–750 (FGPKSDQGMTTSSASSMTPRSPIPTPR) form a disordered region. A compositionally biased stretch (polar residues) spans 730 to 740 (QGMTTSSASSM). The 290-residue stretch at 882-1171 (FEIIKPISRG…AAEVKQHIFF (290 aa)) folds into the Protein kinase domain. ATP is bound by residues 888 to 896 (ISRGAFGRV) and Lys-911. The active-site Proton acceptor is Asp-1005. Ser-1070 is modified (phosphoserine). Residues 1172–1277 (KDINWDTLAR…KNLSQLASIN (106 aa)) form the AGC-kinase C-terminal domain. The interval 1214-1245 (PSGEVPDYSDADSMTNSSGCSSNHHEEGEAEE) is disordered. Residues 1225–1235 (DSMTNSSGCSS) are compositionally biased toward polar residues. The span at 1236 to 1245 (NHHEEGEAEE) shows a compositional bias: basic and acidic residues.

The protein belongs to the protein kinase superfamily. AGC Ser/Thr protein kinase family.

The catalysed reaction is L-seryl-[protein] + ATP = O-phospho-L-seryl-[protein] + ADP + H(+). It carries out the reaction L-threonyl-[protein] + ATP = O-phospho-L-threonyl-[protein] + ADP + H(+). Functionally, may be involved in root hair elongation. The chain is Probable serine/threonine protein kinase IREH1 from Arabidopsis thaliana (Mouse-ear cress).